The chain runs to 189 residues: Interferon alpha-7 (189 aa).

The first 23 residues, 1 to 23 (MARSFSLLMVVLVLSYKSICSLG), serve as a signal peptide directing secretion. 2 cysteine pairs are disulfide-bonded: Cys24–Cys122 and Cys52–Cys162.

It belongs to the alpha/beta interferon family.

It localises to the secreted. Its function is as follows. Produced by macrophages, IFN-alpha have antiviral activities. Interferon stimulates the production of two enzymes: a protein kinase and an oligoadenylate synthetase. In Homo sapiens (Human), this protein is Interferon alpha-7 (IFNA7).